The primary structure comprises 1972 residues: MDPTGSQLDSDFSQQDTPCLIIEDSQPESQVLEDDSGSHFSMLSRHLPNLQTHKENPVLDVVSNPEQTAGEERGDGNSGFNEHLKENKVADPVDSSNLDTCGSISQVIEQLPQPNRTSSVLGMSVESAPAVEEEKGEELEQKEKEKEEDTSGNTTHSLGAEDTASSQLGFGVLELSQSQDVEENTVPYEVDKEQLQSVTTNSGYTRLSDVDANTAIKHEEQSNEDIPIAEQSSKDIPVTAQPSKDVHVVKEQNPPPARSEDMPFSPKASVAAMEAKEQLSAQELMESGLQIQKSPEPEVLSTQEDLFDQSNKTVSSDGCSTPSREEGGCSLASTPATTLHLLQLSGQRSLVQDSLSTNSSDLVAPSPDAFRSTPFIVPSSPTEQEGRQDKPMDTSVLSEEGGEPFQKKLQSGEPVELENPPLLPESTVSPQASTPISQSTPVFPPGSLPIPSQPQFSHDIFIPSPSLEEQSNDGKKDGDMHSSSLTVECSKTSEIEPKNSPEDLGLSLTGDSCKLMLSTSEYSQSPKMESLSSHRIDEDGENTQIEDTEPMSPVLNSKFVPAENDSILMNPAQDGEVQLSQNDDKTKGDDTDTRDDISILATGCKGREETVAEDVCIDLTCDSGSQAVPSPATRSEALSSVLDQEEAMEIKEHHPEEGSSGSEVEEIPETPCESQGEELKEENMESVPLHLSLTETQSQGLCLQKEMPKKECSEAMEVETSVISIDSPQKLAILDQELEHKEQEAWEEATSEDSSVVIVDVKEPSPRVDVSCEPLEGVEKCSDSQSWEDIAPEIEPCAENRLDTKEEKSVEYEGDLKSGTAETEPVEQDSSQPSLPLVRADDPLRLDQELQQPQTQEKTSNSLTEDSKMANAKQLSSDAEAQKLGKPSAHASQSFCESSSETPFHFTLPKEGDIIPPLTGATPPLIGHLKLEPKRHSTPIGISNYPESTIATSDVMSESMVETHDPILGSGKGDSGAAPDVDDKLCLRMKLVSPETEASEESLQFNLEKPATGERKNGSTAVAESVASPQKTMSVLSCICEARQENEARSEDPPTTPIRGNLLHFPSSQGEEEKEKLEGDHTIRQSQQPMKPISPVKDPVSPASQKMVIQGPSSPQGEAMVTDVLEDQKEGRSTNKENPSKALIERPSQNNIGIQTMECSLRVPETVSAATQTIKNVCEQGTSTVDQNFGKQDATVQTERGSGEKPVSAPGDDTESLHSQGEEEFDMPQPPHGHVLHRHMRTIREVRTLVTRVITDVYYVDGTEVERKVTEETEEPIVECQECETEVSPSQTGGSSGDLGDISSFSSKASSLHRTSSGTSLSAMHSSGSSGKGAGPLRGKTSGTEPADFALPSSRGGPGKLSPRKGVSQTGTPVCEEDGDAGLGIRQGGKAPVTPRGRGRRGRPPSRTTGTRETAVPGPLGIEDISPNLSPDDKSFSRVVPRVPDSTRRTDVGAGALRRSDSPEIPFQAAAGPSDGLDASSPGNSFVGLRVVAKWSSNGYFYSGKITRDVGAGKYKLLFDDGYECDVLGKDILLCDPIPLDTEVTALSEDEYFSAGVVKGHRKESGELYYSIEKEGQRKWYKRMAVILSLEQGNRLREQYGLGPYEAVTPLTKAADISLDNLVEGKRKRRSNVSSPATPTASSSSSTTPTRKITESPRASMGVLSGKRKLITSEEERSPAKRGRKSATVKPGAVGAGEFVSPCESGDNTGEPSALEEQRGPLPLNKTLFLGYAFLLTMATTSDKLASRSKLPDGPTGSSEEEEEFLEIPPFNKQYTESQLRAGAGYILEDFNEAQCNTAYQCLLIADQHCRTRKYFLCLASGIPCVSHVWVHDSCHANQLQNYRNYLLPAGYSLEEQRILDWQPRENPFQNLKVLLVSDQQQNFLELWSEILMTGGAASVKQHHSSAHNKDIALGVFDVVVTDPSCPASVLKCAEALQLPVVSQEWVIQCLIVGERIGFKQHPKYKHDYVSH.

3 disordered regions span residues 24-273, 290-332, and 346-507; these read DSQP…VAAM, QIQK…CSLA, and GQRS…LGLS. Ser25 and Ser63 each carry phosphoserine. The span at 82–91 shows a compositional bias: basic and acidic residues; sequence EHLKENKVAD. Residues 94–121 are compositionally biased toward polar residues; it reads DSSNLDTCGSISQVIEQLPQPNRTSSVL. Phosphoserine is present on residues Ser105 and Ser124. The segment covering 138 to 149 has biased composition (basic and acidic residues); that stretch reads ELEQKEKEKEED. Positions 151–168 are enriched in polar residues; that stretch reads SGNTTHSLGAEDTASSQL. Phosphoserine occurs at positions 166, 176, and 178. Over residues 195–205 the composition is skewed to polar residues; it reads LQSVTTNSGYT. Residue Lys217 forms a Glycyl lysine isopeptide (Lys-Gly) (interchain with G-Cter in SUMO1); alternate linkage. Residue Lys217 forms a Glycyl lysine isopeptide (Lys-Gly) (interchain with G-Cter in SUMO2); alternate linkage. Ser222, Ser265, and Ser294 each carry phosphoserine. Polar residues-rich tracts occupy residues 300–322 and 346–361; these read LSTQ…CSTP and GQRS…NSSD. Thr302 carries the post-translational modification Phosphothreonine. Phosphoserine occurs at positions 366, 380, 395, 398, 429, 452, and 464. Residues 426–441 are compositionally biased toward polar residues; that stretch reads STVSPQASTPISQSTP. Residues 442–452 are compositionally biased toward pro residues; the sequence is VFPPGSLPIPS. Residues 481–490 show a composition bias toward polar residues; that stretch reads HSSSLTVECS. The span at 491-501 shows a compositional bias: basic and acidic residues; it reads KTSEIEPKNSP. Ser500, Ser507, Ser518, Ser523, and Ser525 each carry phosphoserine. Residues 520 to 531 are compositionally biased toward polar residues; sequence SEYSQSPKMESL. The tract at residues 520 to 556 is disordered; sequence SEYSQSPKMESLSSHRIDEDGENTQIEDTEPMSPVLN. A compositionally biased stretch (acidic residues) spans 538-549; it reads EDGENTQIEDTE. Phosphothreonine occurs at positions 543 and 548. Ser552, Ser566, and Ser580 each carry phosphoserine. A disordered region spans residues 568–595; sequence LMNPAQDGEVQLSQNDDKTKGDDTDTRD. Over residues 582–595 the composition is skewed to basic and acidic residues; it reads NDDKTKGDDTDTRD. Phosphoserine is present on residues Ser630, Ser635, Ser639, and Ser640. A disordered region spans residues 649–687; the sequence is EIKEHHPEEGSSGSEVEEIPETPCESQGEELKEENMESV. A Phosphothreonine modification is found at Thr670. 8 positions are modified to phosphoserine: Ser692, Ser724, Ser727, Ser771, Ser809, Ser830, Ser831, and Ser834. The interval 742-911 is disordered; it reads EQEAWEEATS…TPFHFTLPKE (170 aa). Positions 798 to 816 are enriched in basic and acidic residues; sequence AENRLDTKEEKSVEYEGDL. Residues 839-848 are compositionally biased toward basic and acidic residues; sequence RADDPLRLDQ. A compositionally biased stretch (polar residues) spans 849–864; that stretch reads ELQQPQTQEKTSNSLT. Thr855 bears the Phosphothreonine mark. A Glycyl lysine isopeptide (Lys-Gly) (interchain with G-Cter in SUMO1); alternate cross-link involves residue Lys868. A Glycyl lysine isopeptide (Lys-Gly) (interchain with G-Cter in SUMO2); alternate cross-link involves residue Lys868. Polar residues predominate over residues 890-902; it reads HASQSFCESSSET. Position 922 is a phosphothreonine (Thr922). Residue Lys930 forms a Glycyl lysine isopeptide (Lys-Gly) (interchain with G-Cter in SUMO2) linkage. Phosphoserine occurs at positions 970 and 975. Lys984 is covalently cross-linked (Glycyl lysine isopeptide (Lys-Gly) (interchain with G-Cter in SUMO2)). 2 disordered regions span residues 997-1028 and 1045-1103; these read EASE…SVAS and ENEA…VSPA. Residues 1018-1028 are compositionally biased toward polar residues; that stretch reads GSTAVAESVAS. Ser1028 carries the phosphoserine modification. Thr1056 is subject to Phosphothreonine. Phosphoserine is present on Ser1068. Over residues 1071–1083 the composition is skewed to basic and acidic residues; it reads EEEKEKLEGDHTI. Phosphoserine is present on residues Ser1086, Ser1094, Ser1101, and Ser1114. Over residues 1127 to 1139 the composition is skewed to basic and acidic residues; that stretch reads DQKEGRSTNKENP. Disordered stretches follow at residues 1127–1148, 1188–1232, and 1269–1478; these read DQKE…ERPS, NFGK…QPPH, and VTEE…DGLD. Ser1148 carries the post-translational modification Phosphoserine. Positions 1188-1200 are enriched in polar residues; the sequence is NFGKQDATVQTER. Thr1214 is modified (phosphothreonine). Residues Ser1216 and Ser1219 each carry the phosphoserine modification. Positions 1272 to 1285 are enriched in acidic residues; the sequence is ETEEPIVECQECET. Low complexity-rich tracts occupy residues 1298–1307 and 1316–1329; these read DLGDISSFSS and SSGT…SSGS. A phosphoserine mark is found at Ser1317 and Ser1342. Arg1355 is subject to Omega-N-methylarginine. The residue at position 1362 (Ser1362) is a Phosphoserine. Lys1365 is covalently cross-linked (Glycyl lysine isopeptide (Lys-Gly) (interchain with G-Cter in SUMO2)). Ser1368 bears the Phosphoserine mark. Residue Thr1372 is modified to Phosphothreonine. The GAR signature appears at 1396-1403; sequence RGRGRRGR. 2 positions are modified to phosphoserine: Ser1426 and Ser1430. A Glycyl lysine isopeptide (Lys-Gly) (interchain with G-Cter in SUMO1); alternate cross-link involves residue Lys1434. Lys1434 participates in a covalent cross-link: Glycyl lysine isopeptide (Lys-Gly) (interchain with G-Cter in SUMO2); alternate. Ser1460, Ser1462, and Ser1474 each carry phosphoserine. Residues 1484 to 1603 are tudor-like; the sequence is NSFVGLRVVA…NRLREQYGLG (120 aa). Residues 1495-1523 form an interaction with dimethylated histone H4 region; that stretch reads WSSNGYFYSGKITRDVGAGKYKLLFDDGY. Lys1563 is covalently cross-linked (Glycyl lysine isopeptide (Lys-Gly) (interchain with G-Cter in SUMO1); alternate). Residue Lys1563 forms a Glycyl lysine isopeptide (Lys-Gly) (interchain with G-Cter in SUMO2); alternate linkage. The UDR motif lies at 1604-1631; sequence PYEAVTPLTKAADISLDNLVEGKRKRRS. Position 1609 is a phosphothreonine (Thr1609). Residues Ser1618, Ser1631, and Ser1635 each carry the phosphoserine modification. 2 disordered regions span residues 1622–1719 and 1745–1768; these read LVEG…EEQR and LASR…FLEI. Positions 1634–1650 are enriched in low complexity; the sequence is SSPATPTASSSSSTTPT. Phosphothreonine is present on residues Thr1638 and Thr1648. A phosphoserine mark is found at Ser1656, Ser1673, and Ser1678. A Glycyl lysine isopeptide (Lys-Gly) (interchain with G-Cter in ubiquitin) cross-link involves residue Lys1685. Ser1701, Ser1759, and Ser1778 each carry phosphoserine. BRCT domains are found at residues 1724 to 1848 and 1864 to 1964; these read LNKT…NYLL and PREN…QHPK.

In terms of assembly, homoligomer. Interacts with p53/TP53 (via the central domain). Interacts with DCLRE1C. Interacts with histone H2AX and this requires phosphorylation of H2AX on 'Ser-139'. Interacts with histone H4 that has been dimethylated at 'Lys-20' (H4K20me2). Has low affinity for histone H4 containing monomethylated 'Lys-20' (H4K20me1). Does not bind histone H4 containing unmethylated or trimethylated 'Lys-20' (H4K20me3). Has low affinity for histone H3 that has been dimethylated on 'Lys-79'. Has very low affinity for histone H3 that has been monomethylated on 'Lys-79' (in vitro). Does not bind unmethylated histone H3. Interacts with histone H2A monoubiquitinated at 'Lys-15' (H2AK15Ub). Interacts with PWWP3A/EXPAND1. Interacts with CHEK2; modulates CHEK2 phosphorylation at 'Thr-68' in response to infrared. Interacts with MSL1; this interaction may be required for MSL1 DNA repair activity, but not for histone acetyltransferase activity. Interacts (when phosphorylated by ATM) with RIF1. Interacts (via the Tudor-like domain) with NUDT16L1/TIRR; interaction masks the Tudor-like domain and prevents recruitment to chromatin. Interacts with PAXIP1. Interacts with SHLD2. Interacts (when phosphorylated) with TOPBP1. Interacts with GFI1; promoting methylation by PRMT1. Interacts with (phosphorylated) DYNLL1; specifically binds DYNLL1 phosphorylated at 'Ser-88' and promotes its recruitment to double stand breaks (DSBs). (Microbial infection) Interacts (via C-terminus) with Epstein-Barr virus lytic switch protein BZLF1 (via C-terminus); this interaction is involved in the activation of the viral lytic cycle. Asymmetrically dimethylated on Arg residues by PRMT1. Methylation is required for DNA binding. Post-translationally, phosphorylated at basal level in the absence of DNA damage. Phosphorylated by ATM in response to DNA damage: phosphorylation at different sites promotes interaction with different set of proteins: phosphorylation at the N-terminus by ATM (residues from 6-178) promotes interaction with PAXIP1 and non-homologous end joining (NHEJ) of dysfunctional telomeres. Phosphorylation by ATM at residues that are located more C-terminus (residues 300-650) leads to promote interaction with RIF1. Interaction with RIF1 leads to disrupt interaction with NUDT16L1/TIRR. Phosphorylation at Thr-1609 and Ser-1618 in the UDR motif blocks interaction with H2AK15ub. Dephosphorylated by PPP4C. Hyperphosphorylation during mitosis correlates with its exclusion from chromatin and DNA lesions. Hyperphosphorylated in an ATR-dependent manner in response to DNA damage induced by UV irradiation. Dephosphorylated by PPP5C. Phosphorylation at Ser-366 and Thr-670 promotes interaction with TOPBP1. Phosphorylated by VRK1. In terms of processing, monoubiquitinated at Lys-1685 by MSL2 is reponse to DNA damage, leading to its stabilization.

The protein localises to the nucleus. The protein resides in the chromosome. It is found in the centromere. It localises to the kinetochore. Functionally, double-strand break (DSB) repair protein involved in response to DNA damage, telomere dynamics and class-switch recombination (CSR) during antibody genesis. Plays a key role in the repair of double-strand DNA breaks (DSBs) in response to DNA damage by promoting non-homologous end joining (NHEJ)-mediated repair of DSBs and specifically counteracting the function of the homologous recombination (HR) repair protein BRCA1. In response to DSBs, phosphorylation by ATM promotes interaction with RIF1 and dissociation from NUDT16L1/TIRR, leading to recruitment to DSBs sites. Recruited to DSBs sites by recognizing and binding histone H2A monoubiquitinated at 'Lys-15' (H2AK15Ub) and histone H4 dimethylated at 'Lys-20' (H4K20me2), two histone marks that are present at DSBs sites. Required for immunoglobulin class-switch recombination (CSR) during antibody genesis, a process that involves the generation of DNA DSBs. Participates in the repair and the orientation of the broken DNA ends during CSR. In contrast, it is not required for classic NHEJ and V(D)J recombination. Promotes NHEJ of dysfunctional telomeres via interaction with PAXIP1. The chain is TP53-binding protein 1 from Homo sapiens (Human).